Reading from the N-terminus, the 147-residue chain is MDLNTLKPALGSVKQGKRIGRGPGSGHGKTATKGHKGQKARSGGSIKAGFEGGQMPLQRRLPKRGFTPLSRVEYAIVNLKQLDAFEANSSVDTESLVAMGLVKSTACAVKILGNGDLAKSLRVSASKFSQSAKDKILAAGGTVEETV.

The disordered stretch occupies residues 1–62 (MDLNTLKPAL…GQMPLQRRLP (62 aa)). Positions 30 to 39 (TATKGHKGQK) are enriched in basic residues.

It belongs to the universal ribosomal protein uL15 family. As to quaternary structure, part of the 50S ribosomal subunit.

Binds to the 23S rRNA. This is Large ribosomal subunit protein uL15 from Pelobacter propionicus (strain DSM 2379 / NBRC 103807 / OttBd1).